Here is a 483-residue protein sequence, read N- to C-terminus: Regulatory protein ViaA (483 aa).

Belongs to the ViaA family. In terms of assembly, homodimer. Interacts with RavA.

The protein localises to the cytoplasm. Component of the RavA-ViaA chaperone complex, which may act on the membrane to optimize the function of some of the respiratory chains. ViaA stimulates the ATPase activity of RavA. The protein is Regulatory protein ViaA of Escherichia coli (strain 55989 / EAEC).